The following is a 362-amino-acid chain: Peptide chain release factor 1 (362 aa).

At Q238 the chain carries N5-methylglutamine.

This sequence belongs to the prokaryotic/mitochondrial release factor family. Methylated by PrmC. Methylation increases the termination efficiency of RF1.

The protein localises to the cytoplasm. Peptide chain release factor 1 directs the termination of translation in response to the peptide chain termination codons UAG and UAA. In Psychrobacter arcticus (strain DSM 17307 / VKM B-2377 / 273-4), this protein is Peptide chain release factor 1.